The sequence spans 26 residues: Aralin B chain (26 aa).

As to quaternary structure, disulfide-linked dimer of A and B chains. Glycosylated. High-mannose type oligosaccharides.

Its function is as follows. Lectin specific for galactose (Gal) and its derivatives. Induces apoptosis. Has cytotoxic activity against several human cancer cell lines. Is less cytotoxic to normal human cells. The chain is Aralin B chain from Aralia elata (Japanese angelica tree).